The primary structure comprises 398 residues: Acetate kinase (398 aa).

Asparagine 7 is a Mg(2+) binding site. ATP is bound at residue lysine 14. Arginine 90 is a substrate binding site. Aspartate 147 (proton donor/acceptor) is an active-site residue. Residues 207–211, 282–284, and 330–334 contribute to the ATP site; these read HLGNG, DMR, and GIGEN. Glutamate 383 provides a ligand contact to Mg(2+).

It belongs to the acetokinase family. Homodimer. Mg(2+) serves as cofactor. The cofactor is Mn(2+).

It localises to the cytoplasm. It carries out the reaction acetate + ATP = acetyl phosphate + ADP. It functions in the pathway metabolic intermediate biosynthesis; acetyl-CoA biosynthesis; acetyl-CoA from acetate: step 1/2. Functionally, catalyzes the formation of acetyl phosphate from acetate and ATP. Can also catalyze the reverse reaction. In Symbiobacterium thermophilum (strain DSM 24528 / JCM 14929 / IAM 14863 / T), this protein is Acetate kinase.